The primary structure comprises 98 residues: Large ribosomal subunit protein uL23 (98 aa).

Belongs to the universal ribosomal protein uL23 family. In terms of assembly, part of the 50S ribosomal subunit. Contacts protein L29, and trigger factor when it is bound to the ribosome.

In terms of biological role, one of the early assembly proteins it binds 23S rRNA. One of the proteins that surrounds the polypeptide exit tunnel on the outside of the ribosome. Forms the main docking site for trigger factor binding to the ribosome. In Nitrobacter hamburgensis (strain DSM 10229 / NCIMB 13809 / X14), this protein is Large ribosomal subunit protein uL23.